The primary structure comprises 186 residues: Acetyltransferase PA5475 (186 aa).

In terms of domain architecture, N-acetyltransferase spans 31–186; sequence VLIRPLREED…STQVIHRLAL (156 aa). CoA is bound by residues 117–119, Gly-125, Asn-156, and 161–163; these read VTI and DLC.

Functionally, catalyzes the transfer of an acetyl group from acetyl coenzyme A (AcCoA) to an acceptor substrate and releases both CoA and the acetylated product. It prefers the antibiotic chloramphenicol. The polypeptide is Acetyltransferase PA5475 (Pseudomonas aeruginosa (strain ATCC 15692 / DSM 22644 / CIP 104116 / JCM 14847 / LMG 12228 / 1C / PRS 101 / PAO1)).